A 136-amino-acid chain; its full sequence is Putative LysR family substrate binding domain-containing protein YagP (136 aa).

It belongs to the LysR transcriptional regulatory family.

The chain is Putative LysR family substrate binding domain-containing protein YagP (yagP) from Escherichia coli (strain K12).